The primary structure comprises 312 residues: Ribosomal protein L11 methyltransferase (312 aa).

The S-adenosyl-L-methionine site is built by threonine 160, glycine 181, aspartate 203, and asparagine 246.

It belongs to the methyltransferase superfamily. PrmA family.

The protein localises to the cytoplasm. The enzyme catalyses L-lysyl-[protein] + 3 S-adenosyl-L-methionine = N(6),N(6),N(6)-trimethyl-L-lysyl-[protein] + 3 S-adenosyl-L-homocysteine + 3 H(+). Methylates ribosomal protein L11. This is Ribosomal protein L11 methyltransferase from Staphylococcus haemolyticus (strain JCSC1435).